The sequence spans 286 residues: MTQLSLKKIYSGKVRDLYEIDDKRMLMVATDRLSAFDVILDDPIPRKGEILTQISNFWFNQLAHIMPNHFTGDTVYDVLPKEEADKVKDRAVVCKRLTPIKIESIVRGYLTGSGLKDYQKTGTICGLALPEGLVEASKLPEPIFTPSSKAEVGDHDVNISYAECEQLIGPELAAQVKEKAIALYQAAAEYALSKGIIICDTKFEFGLDENGTLTLMDEVLTPDSSRFWSVETYREGINPPSFDKQFIRDWLETSGWNKQPPAPKVPAEVIEKTVNKYQEALDLLTK.

Belongs to the SAICAR synthetase family.

It carries out the reaction 5-amino-1-(5-phospho-D-ribosyl)imidazole-4-carboxylate + L-aspartate + ATP = (2S)-2-[5-amino-1-(5-phospho-beta-D-ribosyl)imidazole-4-carboxamido]succinate + ADP + phosphate + 2 H(+). It participates in purine metabolism; IMP biosynthesis via de novo pathway; 5-amino-1-(5-phospho-D-ribosyl)imidazole-4-carboxamide from 5-amino-1-(5-phospho-D-ribosyl)imidazole-4-carboxylate: step 1/2. This Pasteurella multocida (strain Pm70) protein is Phosphoribosylaminoimidazole-succinocarboxamide synthase (purC).